The following is a 122-amino-acid chain: Acidic phospholipase A2 (122 aa).

Intrachain disulfides connect C26–C115, C28–C44, C43–C95, C49–C122, C50–C88, C57–C81, and C75–C86. Y27, G29, and G31 together coordinate Ca(2+). H47 is an active-site residue. Residue D48 participates in Ca(2+) binding. D89 is a catalytic residue.

As to quaternary structure, may form tetramers. Requires Ca(2+) as cofactor. As to expression, expressed by the venom gland.

Its subcellular location is the secreted. The catalysed reaction is a 1,2-diacyl-sn-glycero-3-phosphocholine + H2O = a 1-acyl-sn-glycero-3-phosphocholine + a fatty acid + H(+). Functionally, PLA2 catalyzes the calcium-dependent hydrolysis of the 2-acyl groups in 3-sn-phosphoglycerides. In vivo, is non-lethal to mice when intravenously injected up to a concentration of 30 ug, however does show significant edematogenic activity at the injection site. The polypeptide is Acidic phospholipase A2 (Lachesis acrochorda (Chocoan bushmaster)).